The following is a 425-amino-acid chain: MSDHQSRGQDFSLEADSELRFEIEQKDAKVLVTLVNGFAELFGTELVKKKKYEFGMGAKVAIFTYQGCVLHVTGKMDVCYISKETPMVQYVNCHAALEQFRTEAEEKDRRGPVAMVVGPTDVGKSTLCRILLNYAVRVGRRPLYADLDVGQGAIAISGNVATILIERPASVEEGFPKTAPLVYHFGHKSPSGNSVLYNAVVSKMAEVTLQSLNGNKRTKSSGIIVNTCGWVKGHGYAHLLHAARAYGACAIFVLDQERLYNELLRDVPSSVHVVLLPKSGGVVERSKELRHECRDQRIKEYFYGNARAPFYPFSFEVKFQELRLYKIGAPPLPDSCMPIGMKAEDNKTKVVAVTPTPALIHHVLALSFAESVDDDVIGTNIAGFCCVTEVDMERQVVMLLSPQPRPLPPNALLLWSELQFMDNHT.

ATP contacts are provided by residues Glu18, Lys59, and 121-126 (DVGKST).

Belongs to the Clp1 family. Clp1 subfamily.

The protein localises to the nucleus. Required for endonucleolytic cleavage during polyadenylation-dependent pre-mRNA 3'-end formation. The protein is Protein CLP1 homolog (cbc) of Drosophila persimilis (Fruit fly).